The following is a 76-amino-acid chain: Paralithocin 3 (76 aa).

The N-terminal stretch at 1 to 23 (MGPMKVLLVMLVVMVAAPHIADA) is a signal peptide. 4 cysteine pairs are disulfide-bonded: C31-C62, C40-C58, C44-C56, and C49-C59. At P74 the chain carries Proline amide; partial.

The protein belongs to the paralithocin family. In terms of processing, the amidated form is probably the active form.

Has antibacterial activity, mainly against marine Gram-positive bacteria like C.maltaromaticum (MIC=25 uM), C.mobile (MIC=12.5 uM), C.divergens (MIC=25 uM) and C.funditum (MIC=12.5 uM) but also against C.glutamicum (MIC=12.5 uM). Has very little or no activity against Gram-negative bacteria. The protein is Paralithocin 3 of Paralithodes camtschaticus (Red king crab).